A 478-amino-acid polypeptide reads, in one-letter code: MQQQEQQQGGMKVKVQRFGSYLSGMIMPNIGAFIAWGIITALFIPAGWFPNEQLNTLVSPMITYLLPLLIAYTGGKMIYDHRGGVVGATAAIGVIVGSDIPMFLGAMIMGPLGGYLIKQTDKLFKDKVKQGFEMLINNFTAGIVGAALTILAFYAIGPVVLTLNKLLAAGVEVIVHANLLPVASVFVEPAKVLFLNNAINHGILSPIGIEQASQTGKSILFLVEANPGPGLGILLAYMFFGKGSSKSTAPGAAIIHFFGGIHEIYFPYILMKPALILAAIAGGASGLLTFTIFNAGLVAAASPGSIIALMAMTPRGGYFGVLAGVLVAAAVSFIVSAVILKSSKASEEDLAAATEKMQSMKGKKSQAAAALEAEQAKAEEASELSPESVNKIIFACDAGMGSSAMGASILRNKVKKAELDISVTNTAINNLPSDADIVITHKDLTDRAKAKLPNATHISVDNFLNSPKYDELIEKLKK.

The Cytoplasmic segment spans residues 1-29; sequence MQQQEQQQGGMKVKVQRFGSYLSGMIMPN. The 330-residue stretch at 18–347 folds into the PTS EIIC type-2 domain; it reads FGSYLSGMIM…VILKSSKASE (330 aa). Residues 30–51 form a helical membrane-spanning segment; the sequence is IGAFIAWGIITALFIPAGWFPN. Over 52–55 the chain is Extracellular; it reads EQLN. The helical transmembrane segment at 56–76 threads the bilayer; sequence TLVSPMITYLLPLLIAYTGGK. Residues 77–139 are Cytoplasmic-facing; the sequence is MIYDHRGGVV…QGFEMLINNF (63 aa). A helical transmembrane segment spans residues 140–161; the sequence is TAGIVGAALTILAFYAIGPVVL. Over 162–170 the chain is Extracellular; it reads TLNKLLAAG. Residues 171–191 traverse the membrane as a helical segment; that stretch reads VEVIVHANLLPVASVFVEPAK. Topologically, residues 192 to 278 are cytoplasmic; the sequence is VLFLNNAINH…ILMKPALILA (87 aa). Residues 279 to 298 traverse the membrane as a helical segment; sequence AIAGGASGLLTFTIFNAGLV. Residues 299 to 318 are Extracellular-facing; the sequence is AAASPGSIIALMAMTPRGGY. The chain crosses the membrane as a helical span at residues 319 to 340; the sequence is FGVLAGVLVAAAVSFIVSAVIL. Residues 341-478 are Cytoplasmic-facing; the sequence is KSSKASEEDL…YDELIEKLKK (138 aa). A PTS EIIB type-2 domain is found at 390-478; the sequence is NKIIFACDAG…YDELIEKLKK (89 aa). Cys396 functions as the Phosphocysteine intermediate; for EIIB activity in the catalytic mechanism. The residue at position 396 (Cys396) is a Phosphocysteine; by EIIA.

In terms of assembly, homodimer.

It localises to the cell membrane. It carries out the reaction D-mannitol(out) + N(pros)-phospho-L-histidyl-[protein] = D-mannitol 1-phosphate(in) + L-histidyl-[protein]. Its function is as follows. The phosphoenolpyruvate-dependent sugar phosphotransferase system (sugar PTS), a major carbohydrate active transport system, catalyzes the phosphorylation of incoming sugar substrates concomitantly with their translocation across the cell membrane. The enzyme II CmtAB PTS system is involved in D-mannitol transport. This is PTS system mannitol-specific EIICB component from Bacillus subtilis (strain 168).